Consider the following 229-residue polypeptide: Protein N-lysine methyltransferase METTL21D (229 aa).

The residue at position 2 (alanine 2) is an N-acetylalanine. Serine 8 carries the post-translational modification Phosphoserine. S-adenosyl-L-methionine-binding positions include tryptophan 43, 75-77 (GSG), aspartate 96, tryptophan 126, alanine 143, and tyrosine 148.

This sequence belongs to the methyltransferase superfamily. METTL21 family. In terms of assembly, interacts with ALKBH6. Interacts with ASPSCR1 and UBXN6; interaction with ASPSCR1, but not with UBXN6, enhances VCP methylation.

It is found in the cytoplasm. The catalysed reaction is L-lysyl-[protein] + 3 S-adenosyl-L-methionine = N(6),N(6),N(6)-trimethyl-L-lysyl-[protein] + 3 S-adenosyl-L-homocysteine + 3 H(+). Its function is as follows. Protein N-lysine methyltransferase that specifically trimethylates 'Lys-315' of VCP/p97; this modification may decrease VCP ATPase activity. This is Protein N-lysine methyltransferase METTL21D (VCPKMT) from Homo sapiens (Human).